A 489-amino-acid polypeptide reads, in one-letter code: MTKSDLLFDKFNDKHGKFLVFFGTFVDTPKLGELRIREKTSVGVLNGIIRFVNRNSLDPVKDCLDHDSSLSPEDVTVVDIIGKDKTRNNSFYFPGFVDTHNHVSQYPNVGVFGNSTLLDWLEKYTFPIEAALANENIAREVYNKVISKTLSHGTTTVAYYNTIDLKSTKLLAQLSSLLGQRVLVGKVCMDTNGPEYYIEDTKTSFESTVKVVKYIRETICDPLVNPIVTPRFAPSCSRELMQQLSKLVKDENIHVQTHLSENKEEIQWVQDLFPECESYTDVYDKYGLLTEKTVLAHCIHLTDAEARVIKQRRCGISHCPISNSSLTSGECRVRWLLDQGIKVGLGTDVSAGHSCSILTTGRQAFAVSRHLAMRETDHAKLSVSECLFLATMGGAQVLRMDETLGTFDVGKQFDAQMIDTNAPGSNVDMFHWQLKEKDQMQEQEQEQGQDPYKNPPLLTNEDIIAKWFFNGDDRNTTKVWVAGQQVYQI.

Histidine 100 and histidine 102 together coordinate Zn(2+). Residues 102-105 (HVSQ), 231-232 (RF), 258-261 (HLSE), and aspartate 348 contribute to the substrate site. Zn(2+) contacts are provided by histidine 258 and aspartate 348.

This sequence belongs to the metallo-dependent hydrolases superfamily. ATZ/TRZ family. Requires Zn(2+) as cofactor.

It localises to the cytoplasm. It carries out the reaction guanine + H2O + H(+) = xanthine + NH4(+). It participates in purine metabolism; guanine degradation; xanthine from guanine: step 1/1. Functionally, catalyzes the hydrolytic deamination of guanine, producing xanthine and ammonia. In Saccharomyces cerevisiae (strain ATCC 204508 / S288c) (Baker's yeast), this protein is Probable guanine deaminase (GUD1).